A 380-amino-acid chain; its full sequence is Cytochrome b (380 aa).

4 helical membrane-spanning segments follow: residues 34–54, 78–99, 114–134, and 179–199; these read FGSL…LLAM, WLIR…FLHI, WNTG…GYVL, and FFAL…IHLI. Residues H84 and H98 each coordinate heme b. Residues H183 and H197 each contribute to the heme b site. H202 serves as a coordination point for a ubiquinone. Transmembrane regions (helical) follow at residues 227–247, 289–309, 321–341, and 348–368; these read LKDI…ALFS, LGGV…PFLH, LSQT…WVGS, and FIII…ILFP.

It belongs to the cytochrome b family. As to quaternary structure, the cytochrome bc1 complex contains 11 subunits: 3 respiratory subunits (MT-CYB, CYC1 and UQCRFS1), 2 core proteins (UQCRC1 and UQCRC2) and 6 low-molecular weight proteins (UQCRH/QCR6, UQCRB/QCR7, UQCRQ/QCR8, UQCR10/QCR9, UQCR11/QCR10 and a cleavage product of UQCRFS1). This cytochrome bc1 complex then forms a dimer. Heme b serves as cofactor.

Its subcellular location is the mitochondrion inner membrane. Functionally, component of the ubiquinol-cytochrome c reductase complex (complex III or cytochrome b-c1 complex) that is part of the mitochondrial respiratory chain. The b-c1 complex mediates electron transfer from ubiquinol to cytochrome c. Contributes to the generation of a proton gradient across the mitochondrial membrane that is then used for ATP synthesis. The chain is Cytochrome b (MT-CYB) from Tragopan temminckii (Temminck's tragopan).